A 149-amino-acid polypeptide reads, in one-letter code: Arginine repressor (149 aa).

It belongs to the ArgR family.

The protein localises to the cytoplasm. The protein operates within amino-acid biosynthesis; L-arginine biosynthesis [regulation]. Functionally, regulates arginine biosynthesis genes. In Oceanobacillus iheyensis (strain DSM 14371 / CIP 107618 / JCM 11309 / KCTC 3954 / HTE831), this protein is Arginine repressor.